Consider the following 314-residue polypeptide: tRNA dimethylallyltransferase (314 aa).

9-16 lines the ATP pocket; the sequence is GPTAVGKT. Substrate is bound at residue 11–16; that stretch reads TAVGKT. Residues 34–37 form an interaction with substrate tRNA region; the sequence is DSVQ.

Belongs to the IPP transferase family. Monomer. The cofactor is Mg(2+).

It catalyses the reaction adenosine(37) in tRNA + dimethylallyl diphosphate = N(6)-dimethylallyladenosine(37) in tRNA + diphosphate. Its function is as follows. Catalyzes the transfer of a dimethylallyl group onto the adenine at position 37 in tRNAs that read codons beginning with uridine, leading to the formation of N6-(dimethylallyl)adenosine (i(6)A). This chain is tRNA dimethylallyltransferase, found in Desulfitobacterium hafniense (strain DSM 10664 / DCB-2).